Here is a 159-residue protein sequence, read N- to C-terminus: Large ribosomal subunit protein uL15 (159 aa).

The segment covering M1–R18 has biased composition (basic and acidic residues). Residues M1 to K39 are disordered. The segment covering R21 to V35 has biased composition (gly residues).

This sequence belongs to the universal ribosomal protein uL15 family. In terms of assembly, part of the 50S ribosomal subunit.

Its function is as follows. Binds to the 23S rRNA. The sequence is that of Large ribosomal subunit protein uL15 from Allorhizobium ampelinum (strain ATCC BAA-846 / DSM 112012 / S4) (Agrobacterium vitis (strain S4)).